A 117-amino-acid polypeptide reads, in one-letter code: Holo-[acyl-carrier-protein] synthase (117 aa).

Mg(2+) contacts are provided by Asp-8 and Glu-57.

This sequence belongs to the P-Pant transferase superfamily. AcpS family. It depends on Mg(2+) as a cofactor.

Its subcellular location is the cytoplasm. The enzyme catalyses apo-[ACP] + CoA = holo-[ACP] + adenosine 3',5'-bisphosphate + H(+). Its function is as follows. Transfers the 4'-phosphopantetheine moiety from coenzyme A to a Ser of acyl-carrier-protein. This is Holo-[acyl-carrier-protein] synthase from Limosilactobacillus reuteri (Lactobacillus reuteri).